The sequence spans 442 residues: UDP-N-acetylmuramoylalanine--D-glutamate ligase (442 aa).

113–119 (GSNGKTT) lines the ATP pocket.

It belongs to the MurCDEF family.

The protein localises to the cytoplasm. The catalysed reaction is UDP-N-acetyl-alpha-D-muramoyl-L-alanine + D-glutamate + ATP = UDP-N-acetyl-alpha-D-muramoyl-L-alanyl-D-glutamate + ADP + phosphate + H(+). It functions in the pathway cell wall biogenesis; peptidoglycan biosynthesis. Cell wall formation. Catalyzes the addition of glutamate to the nucleotide precursor UDP-N-acetylmuramoyl-L-alanine (UMA). The chain is UDP-N-acetylmuramoylalanine--D-glutamate ligase from Coxiella burnetii (strain CbuG_Q212) (Coxiella burnetii (strain Q212)).